Here is a 208-residue protein sequence, read N- to C-terminus: Small ribosomal subunit protein uS4 (208 aa).

Positions 98–160 (CRLDNVVYRM…AKKQSRIQLA (63 aa)) constitute an S4 RNA-binding domain.

It belongs to the universal ribosomal protein uS4 family. Part of the 30S ribosomal subunit. Contacts protein S5. The interaction surface between S4 and S5 is involved in control of translational fidelity.

Functionally, one of the primary rRNA binding proteins, it binds directly to 16S rRNA where it nucleates assembly of the body of the 30S subunit. In terms of biological role, with S5 and S12 plays an important role in translational accuracy. In Vesicomyosocius okutanii subsp. Calyptogena okutanii (strain HA), this protein is Small ribosomal subunit protein uS4.